The sequence spans 81 residues: Acylphosphatase (81 aa).

The region spanning 1-81 (MYIFHGRVQG…VKYNDFQIRY (81 aa)) is the Acylphosphatase-like domain. Catalysis depends on residues arginine 14 and asparagine 32.

The protein belongs to the acylphosphatase family.

It catalyses the reaction an acyl phosphate + H2O = a carboxylate + phosphate + H(+). In Picrophilus torridus (strain ATCC 700027 / DSM 9790 / JCM 10055 / NBRC 100828 / KAW 2/3), this protein is Acylphosphatase (acyP).